Here is a 105-residue protein sequence, read N- to C-terminus: uncharacterized protein (105 aa).

This sequence belongs to the baculoviridae 11 kDa protein family.

This is an uncharacterized protein from Autographa californica nuclear polyhedrosis virus (AcMNPV).